Here is a 143-residue protein sequence, read N- to C-terminus: Large ribosomal subunit protein uL15 (143 aa).

Residues 1–58 (MQLNDLRSAPGARREKHRPGRGIGSGLGKTGGRGHKGQTSRSGGSIAPGFEGGQQPLH) form a disordered region. A compositionally biased stretch (gly residues) spans 21–31 (RGIGSGLGKTG).

The protein belongs to the universal ribosomal protein uL15 family. Part of the 50S ribosomal subunit.

Binds to the 23S rRNA. This is Large ribosomal subunit protein uL15 from Ectopseudomonas mendocina (strain ymp) (Pseudomonas mendocina).